The primary structure comprises 597 residues: Probable potassium transport system protein Kup 1 (597 aa).

10 consecutive transmembrane segments (helical) span residues 23–43 (GAWL…DSVL), 72–92 (LTMM…SRGT), 98–118 (VFGS…VVAI), 143–163 (ATGL…EALY), 174–194 (IYFT…GQGA), 226–246 (AVVL…TGAF), 273–293 (LYIP…LLLF), 303–323 (YGLA…IYLW), 329–349 (FGAV…FAAS), and 353–373 (FLHG…IMYT).

The protein belongs to the HAK/KUP transporter (TC 2.A.72) family.

It is found in the cell membrane. It catalyses the reaction K(+)(in) + H(+)(in) = K(+)(out) + H(+)(out). Functionally, transport of potassium into the cell. Likely operates as a K(+):H(+) symporter. The protein is Probable potassium transport system protein Kup 1 (kup1) of Bifidobacterium longum (strain NCC 2705).